The chain runs to 255 residues: Octanoyltransferase (255 aa).

Positions 1–27 are disordered; that stretch reads MPPASDAHAAPDAAASTSASPQSCAAP. Residues 59–240 form the BPL/LPL catalytic domain; that stretch reads PDTGDEIWVV…RLIANLDGAT (182 aa). Substrate is bound by residues 99-106, 171-173, and 184-186; these read RGGQITYH, ALG, and GLS. Residue C202 is the Acyl-thioester intermediate of the active site.

The protein belongs to the LipB family.

Its subcellular location is the cytoplasm. The catalysed reaction is octanoyl-[ACP] + L-lysyl-[protein] = N(6)-octanoyl-L-lysyl-[protein] + holo-[ACP] + H(+). It participates in protein modification; protein lipoylation via endogenous pathway; protein N(6)-(lipoyl)lysine from octanoyl-[acyl-carrier-protein]: step 1/2. In terms of biological role, catalyzes the transfer of endogenously produced octanoic acid from octanoyl-acyl-carrier-protein onto the lipoyl domains of lipoate-dependent enzymes. Lipoyl-ACP can also act as a substrate although octanoyl-ACP is likely to be the physiological substrate. The protein is Octanoyltransferase of Burkholderia thailandensis (strain ATCC 700388 / DSM 13276 / CCUG 48851 / CIP 106301 / E264).